The chain runs to 431 residues: Enolase (431 aa).

Glutamine 167 is a binding site for (2R)-2-phosphoglycerate. Glutamate 209 serves as the catalytic Proton donor. Residues aspartate 246, glutamate 289, and aspartate 316 each coordinate Mg(2+). The (2R)-2-phosphoglycerate site is built by lysine 341, arginine 370, serine 371, and lysine 392. Lysine 341 serves as the catalytic Proton acceptor.

The protein belongs to the enolase family. As to quaternary structure, component of the RNA degradosome, a multiprotein complex involved in RNA processing and mRNA degradation. Mg(2+) serves as cofactor.

It localises to the cytoplasm. The protein localises to the secreted. It is found in the cell surface. The enzyme catalyses (2R)-2-phosphoglycerate = phosphoenolpyruvate + H2O. It participates in carbohydrate degradation; glycolysis; pyruvate from D-glyceraldehyde 3-phosphate: step 4/5. Its function is as follows. Catalyzes the reversible conversion of 2-phosphoglycerate (2-PG) into phosphoenolpyruvate (PEP). It is essential for the degradation of carbohydrates via glycolysis. In Shewanella baltica (strain OS223), this protein is Enolase.